The chain runs to 142 residues: Large ribosomal subunit protein uL13 (142 aa).

Belongs to the universal ribosomal protein uL13 family. In terms of assembly, part of the 50S ribosomal subunit.

Functionally, this protein is one of the early assembly proteins of the 50S ribosomal subunit, although it is not seen to bind rRNA by itself. It is important during the early stages of 50S assembly. In Syntrophobacter fumaroxidans (strain DSM 10017 / MPOB), this protein is Large ribosomal subunit protein uL13.